A 369-amino-acid polypeptide reads, in one-letter code: UDP-N-acetylglucosamine--N-acetylmuramyl-(pentapeptide) pyrophosphoryl-undecaprenol N-acetylglucosamine transferase (369 aa).

Residues 10-12, Asn-124, Ser-195, Ile-252, and Gln-297 each bind UDP-N-acetyl-alpha-D-glucosamine; that span reads TGG.

The protein belongs to the glycosyltransferase 28 family. MurG subfamily.

Its subcellular location is the cell membrane. It catalyses the reaction Mur2Ac(oyl-L-Ala-gamma-D-Glu-L-Lys-D-Ala-D-Ala)-di-trans,octa-cis-undecaprenyl diphosphate + UDP-N-acetyl-alpha-D-glucosamine = beta-D-GlcNAc-(1-&gt;4)-Mur2Ac(oyl-L-Ala-gamma-D-Glu-L-Lys-D-Ala-D-Ala)-di-trans,octa-cis-undecaprenyl diphosphate + UDP + H(+). It functions in the pathway cell wall biogenesis; peptidoglycan biosynthesis. Its function is as follows. Cell wall formation. Catalyzes the transfer of a GlcNAc subunit on undecaprenyl-pyrophosphoryl-MurNAc-pentapeptide (lipid intermediate I) to form undecaprenyl-pyrophosphoryl-MurNAc-(pentapeptide)GlcNAc (lipid intermediate II). This Leuconostoc citreum (strain KM20) protein is UDP-N-acetylglucosamine--N-acetylmuramyl-(pentapeptide) pyrophosphoryl-undecaprenol N-acetylglucosamine transferase.